The primary structure comprises 185 residues: Ribosome-recycling factor (185 aa).

The protein belongs to the RRF family.

The protein localises to the cytoplasm. Its function is as follows. Responsible for the release of ribosomes from messenger RNA at the termination of protein biosynthesis. May increase the efficiency of translation by recycling ribosomes from one round of translation to another. This chain is Ribosome-recycling factor, found in Methylococcus capsulatus (strain ATCC 33009 / NCIMB 11132 / Bath).